The primary structure comprises 451 residues: Phosphoglucosamine mutase (451 aa).

The active-site Phosphoserine intermediate is the Ser102. Residues Ser102, Asp243, Asp245, and Asp247 each contribute to the Mg(2+) site. Ser102 bears the Phosphoserine mark.

Belongs to the phosphohexose mutase family. Mg(2+) serves as cofactor. In terms of processing, activated by phosphorylation.

The catalysed reaction is alpha-D-glucosamine 1-phosphate = D-glucosamine 6-phosphate. Catalyzes the conversion of glucosamine-6-phosphate to glucosamine-1-phosphate. This chain is Phosphoglucosamine mutase, found in Brucella abortus (strain 2308).